The sequence spans 149 residues: Oligosaccharyltransferase complex subunit ostc (149 aa).

Residues 1–32 (METLFSLPFTVLECPNVKLKKPSWLHMPSAMT) lie on the Cytoplasmic side of the membrane. Residues 33 to 53 (VYAVVIVSYFLITGGIIYDVI) traverse the membrane as a helical segment. The Extracellular portion of the chain corresponds to 54 to 83 (VEPPSVGSMTDEHGHQRPVAFLAYRVNGQY). A helical transmembrane segment spans residues 84–104 (IMEGLASSFLFTMGGLGFIIL). The Cytoplasmic segment spans residues 105 to 117 (DRSNAPNIPKLNR). Residues 118-138 (FLLLFIGFVSVLLSFFMARVF) traverse the membrane as a helical segment. At 139-149 (MRMKLPGYLMG) the chain is on the extracellular side.

This sequence belongs to the OSTC family. As to quaternary structure, specific component of the STT3A-containing form of the oligosaccharyltransferase (OST) complex.

The protein localises to the membrane. It functions in the pathway protein modification; protein glycosylation. In terms of biological role, specific component of the STT3A-containing form of the oligosaccharyl transferase (OST) complex that catalyzes the initial transfer of a defined glycan (Glc(3)Man(9)GlcNAc(2) in eukaryotes) from the lipid carrier dolichol-pyrophosphate to an asparagine residue within an Asn-X-Ser/Thr consensus motif in nascent polypeptide chains, the first step in protein N-glycosylation. N-glycosylation occurs cotranslationally and the complex associates with the Sec61 complex at the channel-forming translocon complex that mediates protein translocation across the endoplasmic reticulum (ER). All subunits are required for a maximal enzyme activity. This chain is Oligosaccharyltransferase complex subunit ostc, found in Danio rerio (Zebrafish).